The chain runs to 248 residues: DNA repair protein RecO (248 aa).

Belongs to the RecO family.

Involved in DNA repair and RecF pathway recombination. In Rubrobacter xylanophilus (strain DSM 9941 / JCM 11954 / NBRC 16129 / PRD-1), this protein is DNA repair protein RecO.